The chain runs to 126 residues: Chemocyanin (126 aa).

A signal peptide spans 1 to 30 (MAQGSGSAERALVLGVVLVFLVFNCEVAES). Residues 31–126 (VVYTVGDGGG…GGLKIAVTAA (96 aa)) form the Phytocyanin domain. Cu cation-binding residues include His69, Cys109, and His114. An intrachain disulfide couples Cys82 to Cys115.

In terms of tissue distribution, strongly expressed in stigma and style and to a lesser extent in leaves, ovary and petals. Not detected in pollen tubes, mature anthers or roots.

Functionally, diffusible chemotropic factor that induces pollen tube chemotropism. In Lilium longiflorum (Trumpet lily), this protein is Chemocyanin.